The primary structure comprises 208 residues: Guanylate kinase (208 aa).

One can recognise a Guanylate kinase-like domain in the interval 4 to 185 (GNLYIISAPS…ALVDLEHILR (182 aa)). 11–18 (APSGAGKS) contacts ATP.

Belongs to the guanylate kinase family.

The protein localises to the cytoplasm. It carries out the reaction GMP + ATP = GDP + ADP. Functionally, essential for recycling GMP and indirectly, cGMP. In Histophilus somni (strain 129Pt) (Haemophilus somnus), this protein is Guanylate kinase.